A 340-amino-acid polypeptide reads, in one-letter code: uncharacterized protein (340 aa).

The first 23 residues, 1-23, serve as a signal peptide directing secretion; that stretch reads MQKKVLSLVLVLAVLESIVPVSA.

This is an uncharacterized protein from Archaeoglobus fulgidus (strain ATCC 49558 / DSM 4304 / JCM 9628 / NBRC 100126 / VC-16).